A 364-amino-acid chain; its full sequence is Large ribosomal subunit protein bL27m (364 aa).

Residues 1–19 (MFSSSWQQVPKFVVQQVRT) constitute a mitochondrion transit peptide.

The protein belongs to the bacterial ribosomal protein bL27 family.

It is found in the mitochondrion. In terms of biological role, component of the large subunit of mitochondrial ribosome. This Kluyveromyces lactis (strain ATCC 8585 / CBS 2359 / DSM 70799 / NBRC 1267 / NRRL Y-1140 / WM37) (Yeast) protein is Large ribosomal subunit protein bL27m (MRPL2).